The sequence spans 224 residues: uncharacterized protein (224 aa).

This is an uncharacterized protein from Methanocaldococcus jannaschii (strain ATCC 43067 / DSM 2661 / JAL-1 / JCM 10045 / NBRC 100440) (Methanococcus jannaschii).